Reading from the N-terminus, the 477-residue chain is Bifunctional protein HldE (477 aa).

Residues 1 to 318 (MKLSMPRFDQ…RAIQREEGSE (318 aa)) form a ribokinase region. 194 to 197 (NLSE) is a binding site for ATP. Residue aspartate 263 is part of the active site. Residues 343–477 (FTNGCFDILH…EKIRKTDKAE (135 aa)) form a cytidylyltransferase region.

The protein in the N-terminal section; belongs to the carbohydrate kinase PfkB family. In the C-terminal section; belongs to the cytidylyltransferase family. As to quaternary structure, homodimer.

The catalysed reaction is D-glycero-beta-D-manno-heptose 7-phosphate + ATP = D-glycero-beta-D-manno-heptose 1,7-bisphosphate + ADP + H(+). The enzyme catalyses D-glycero-beta-D-manno-heptose 1-phosphate + ATP + H(+) = ADP-D-glycero-beta-D-manno-heptose + diphosphate. It functions in the pathway nucleotide-sugar biosynthesis; ADP-L-glycero-beta-D-manno-heptose biosynthesis; ADP-L-glycero-beta-D-manno-heptose from D-glycero-beta-D-manno-heptose 7-phosphate: step 1/4. Its pathway is nucleotide-sugar biosynthesis; ADP-L-glycero-beta-D-manno-heptose biosynthesis; ADP-L-glycero-beta-D-manno-heptose from D-glycero-beta-D-manno-heptose 7-phosphate: step 3/4. Functionally, catalyzes the phosphorylation of D-glycero-D-manno-heptose 7-phosphate at the C-1 position to selectively form D-glycero-beta-D-manno-heptose-1,7-bisphosphate. Catalyzes the ADP transfer from ATP to D-glycero-beta-D-manno-heptose 1-phosphate, yielding ADP-D-glycero-beta-D-manno-heptose. The protein is Bifunctional protein HldE of Pseudomonas fluorescens (strain ATCC BAA-477 / NRRL B-23932 / Pf-5).